The sequence spans 121 residues: Large ribosomal subunit protein bL12 (121 aa).

This sequence belongs to the bacterial ribosomal protein bL12 family. In terms of assembly, homodimer. Part of the ribosomal stalk of the 50S ribosomal subunit. Forms a multimeric L10(L12)X complex, where L10 forms an elongated spine to which 2 to 4 L12 dimers bind in a sequential fashion. Binds GTP-bound translation factors.

Its function is as follows. Forms part of the ribosomal stalk which helps the ribosome interact with GTP-bound translation factors. Is thus essential for accurate translation. The sequence is that of Large ribosomal subunit protein bL12 from Proteus mirabilis (strain HI4320).